The sequence spans 440 residues: Discs overgrown protein kinase (440 aa).

In terms of domain architecture, Protein kinase spans 9 to 277 (YRLGRKIGSG…HLRKLFRNLF (269 aa)). ATP-binding positions include 15 to 23 (IGSGSFGDI) and lysine 38. Aspartate 128 acts as the Proton acceptor in catalysis. The nuclear localization signal; essential for interaction with Bdbt and important for nuclear localization stretch occupies residues 221-224 (KRQK). Residues serine 333 and serine 334 each carry the phosphoserine modification. The segment at 376–440 (SQLIGGNGLN…GGGGGVGNAK (65 aa)) is disordered. Positions 413–440 (QGGGGGGGGVGVGGMPSGGGGGGVGNAK) are enriched in gly residues.

This sequence belongs to the protein kinase superfamily. CK1 Ser/Thr protein kinase family. Casein kinase I subfamily. As to quaternary structure, forms a complex with per. Interacts with Dlish. Interacts (via nuclear localization signal) with Bdbt. As to expression, detected in the head (at protein level). Expressed in photoreceptor cells of the eyes as well as in the region situated between the optic lobe and the central brain.

The protein localises to the nucleus. The protein resides in the cytoplasm. It localises to the cytosol. The catalysed reaction is L-seryl-[protein] + ATP = O-phospho-L-seryl-[protein] + ADP + H(+). It carries out the reaction L-threonyl-[protein] + ATP = O-phospho-L-threonyl-[protein] + ADP + H(+). In terms of biological role, serine/threonine-protein kinase which is involved in the circadian rhythm pathway, viability and planar cell polarity. In the circadian rhythm pathway, phosphorylates the clock gene period (per) and targets it for degradation in the absence of timeless (tim), thus contributing to production of the circadian oscillations of the clock genes. Together with CkIalpha, regulates processing of ci by phosphorylating it, which promotes its binding to slmb, the F-box recognition component of the SCF(slmb) E3 ubiquitin-protein ligase. Involved in the inhibition of apoptosis during cell proliferation and growth arrest in imaginal disks. Also functions in planar cell polarity. In Drosophila melanogaster (Fruit fly), this protein is Discs overgrown protein kinase (dco).